Consider the following 492-residue polypeptide: Glutamyl-tRNA(Gln) amidotransferase subunit A (492 aa).

Catalysis depends on charge relay system residues K79 and S154. The active-site Acyl-ester intermediate is S178.

Belongs to the amidase family. GatA subfamily. As to quaternary structure, heterotrimer of A, B and C subunits.

It catalyses the reaction L-glutamyl-tRNA(Gln) + L-glutamine + ATP + H2O = L-glutaminyl-tRNA(Gln) + L-glutamate + ADP + phosphate + H(+). Allows the formation of correctly charged Gln-tRNA(Gln) through the transamidation of misacylated Glu-tRNA(Gln) in organisms which lack glutaminyl-tRNA synthetase. The reaction takes place in the presence of glutamine and ATP through an activated gamma-phospho-Glu-tRNA(Gln). The chain is Glutamyl-tRNA(Gln) amidotransferase subunit A from Acinetobacter baumannii (strain AB0057).